Reading from the N-terminus, the 1143-residue chain is DNA-directed RNA polymerase subunit beta (1143 aa).

This sequence belongs to the RNA polymerase beta chain family. In terms of assembly, in plastids the minimal PEP RNA polymerase catalytic core is composed of four subunits: alpha, beta, beta', and beta''. When a (nuclear-encoded) sigma factor is associated with the core the holoenzyme is formed, which can initiate transcription.

It is found in the plastid. Its subcellular location is the chloroplast. The catalysed reaction is RNA(n) + a ribonucleoside 5'-triphosphate = RNA(n+1) + diphosphate. DNA-dependent RNA polymerase catalyzes the transcription of DNA into RNA using the four ribonucleoside triphosphates as substrates. The polypeptide is DNA-directed RNA polymerase subunit beta (Porphyra purpurea (Red seaweed)).